A 391-amino-acid chain; its full sequence is Heme A synthase (391 aa).

A run of 8 helical transmembrane segments spans residues 37–57 (IRLW…VGGL), 121–141 (RQLG…FLAA), 152–172 (LLAL…MVAS), 186–206 (LATH…QALL), 229–249 (TTVL…VAGI), 298–318 (FLHR…WIFG), 332–352 (LLAM…LSAA), and 354–374 (WQVA…ILHA). Residue H300 participates in heme binding. Position 360 (H360) interacts with heme.

It belongs to the COX15/CtaA family. Type 2 subfamily. In terms of assembly, interacts with CtaB. The cofactor is heme b.

It is found in the cell membrane. It catalyses the reaction Fe(II)-heme o + 2 A + H2O = Fe(II)-heme a + 2 AH2. Its pathway is porphyrin-containing compound metabolism; heme A biosynthesis; heme A from heme O: step 1/1. Functionally, catalyzes the conversion of heme O to heme A by two successive hydroxylations of the methyl group at C8. The first hydroxylation forms heme I, the second hydroxylation results in an unstable dihydroxymethyl group, which spontaneously dehydrates, resulting in the formyl group of heme A. This Cereibacter sphaeroides (strain KD131 / KCTC 12085) (Rhodobacter sphaeroides) protein is Heme A synthase.